A 449-amino-acid chain; its full sequence is Kynurenine 3-monooxygenase (449 aa).

The protein belongs to the aromatic-ring hydroxylase family. KMO subfamily. FAD serves as cofactor.

It catalyses the reaction L-kynurenine + NADPH + O2 + H(+) = 3-hydroxy-L-kynurenine + NADP(+) + H2O. The protein operates within cofactor biosynthesis; NAD(+) biosynthesis; quinolinate from L-kynurenine: step 1/3. Catalyzes the hydroxylation of L-kynurenine (L-Kyn) to form 3-hydroxy-L-kynurenine (L-3OHKyn). Required for synthesis of quinolinic acid. This chain is Kynurenine 3-monooxygenase, found in Cytophaga hutchinsonii (strain ATCC 33406 / DSM 1761 / CIP 103989 / NBRC 15051 / NCIMB 9469 / D465).